Reading from the N-terminus, the 172-residue chain is NADH-quinone oxidoreductase subunit B (172 aa).

Residues Cys-52, Cys-53, Cys-117, and Cys-147 each contribute to the [4Fe-4S] cluster site.

It belongs to the complex I 20 kDa subunit family. As to quaternary structure, NDH-1 is composed of 14 different subunits. Subunits NuoB, C, D, E, F, and G constitute the peripheral sector of the complex. [4Fe-4S] cluster serves as cofactor.

It is found in the cell inner membrane. It carries out the reaction a quinone + NADH + 5 H(+)(in) = a quinol + NAD(+) + 4 H(+)(out). NDH-1 shuttles electrons from NADH, via FMN and iron-sulfur (Fe-S) centers, to quinones in the respiratory chain. Couples the redox reaction to proton translocation (for every two electrons transferred, four hydrogen ions are translocated across the cytoplasmic membrane), and thus conserves the redox energy in a proton gradient. The chain is NADH-quinone oxidoreductase subunit B from Ehrlichia ruminantium (strain Gardel).